The primary structure comprises 43 residues: KNYGNGVYCNKHKCSVDWATFSANIANNSVAMAGLTGGNAGNK.

C9 and C14 are disulfide-bonded.

The protein resides in the secreted. Highly active against Gram-positive bacteria M.flavus strain ATCC 400, M.luteus strain CECT241, C.soprogenes strain NCTC533, L.monocytogenes strain ATCC 19111, L.inocua strain ATCC BAA-680D and S.carnosus strain LMG13564. Less active against B.cereus strain LMG13569, C.thiaminolyticum strain ATCC 15579, E.faecalis strain NCTC8176, L.lactis strain LM0230, L.casei strain ATCC 344, L.lactis strain IL1403, L.jensenii strain ATCC 25258, L.plantarum strain CECT220, L.brevis strain ATCC 8287, L.bulgaricus strain LMG13551, P.acidilactici strain ATCC 25740, P.pentosaceus strain ATCC 33316 and P.pentosaceus strain LMG13560. Weakly active against L.mesenteroides strain ATCC 19254, L.lactis strain ATCC 1454, L.sakei strain CECT906T, L.lactis subsp. cremoris strain MC1363 and L.curvatus strain ATCC 51436. Not active against Gram-negative bacterium S.enteritidis strain ATCC 13076. The mode of action appears to be non-lytic. Inactivated by proteinase K, but insensitive to trypsin, alpha-chymotrypsin, pepsin and papain. This Weissella paramesenteroides (Leuconostoc paramesenteroides) protein is Bacteriocin weissellin-A.